The following is a 264-amino-acid chain: Thymidylate synthase (264 aa).

R21 contributes to the dUMP binding site. Residue H51 participates in (6R)-5,10-methylene-5,6,7,8-tetrahydrofolate binding. 126 to 127 lines the dUMP pocket; the sequence is RR. C146 functions as the Nucleophile in the catalytic mechanism. DUMP is bound by residues 166-169, N177, and 207-209; these read RSCD and HLY. D169 serves as a coordination point for (6R)-5,10-methylene-5,6,7,8-tetrahydrofolate. Position 263 (S263) interacts with (6R)-5,10-methylene-5,6,7,8-tetrahydrofolate.

It belongs to the thymidylate synthase family. Bacterial-type ThyA subfamily. As to quaternary structure, homodimer.

It is found in the cytoplasm. The catalysed reaction is dUMP + (6R)-5,10-methylene-5,6,7,8-tetrahydrofolate = 7,8-dihydrofolate + dTMP. It participates in pyrimidine metabolism; dTTP biosynthesis. Functionally, catalyzes the reductive methylation of 2'-deoxyuridine-5'-monophosphate (dUMP) to 2'-deoxythymidine-5'-monophosphate (dTMP) while utilizing 5,10-methylenetetrahydrofolate (mTHF) as the methyl donor and reductant in the reaction, yielding dihydrofolate (DHF) as a by-product. This enzymatic reaction provides an intracellular de novo source of dTMP, an essential precursor for DNA biosynthesis. This Buchnera aphidicola subsp. Acyrthosiphon pisum (strain 5A) protein is Thymidylate synthase.